We begin with the raw amino-acid sequence, 128 residues long: Large ribosomal subunit protein bL12 (128 aa).

It belongs to the bacterial ribosomal protein bL12 family. As to quaternary structure, homodimer. Part of the ribosomal stalk of the 50S ribosomal subunit. Forms a multimeric L10(L12)X complex, where L10 forms an elongated spine to which 2 to 4 L12 dimers bind in a sequential fashion. Binds GTP-bound translation factors.

Its function is as follows. Forms part of the ribosomal stalk which helps the ribosome interact with GTP-bound translation factors. Is thus essential for accurate translation. This is Large ribosomal subunit protein bL12 from Synechococcus sp. (strain ATCC 27144 / PCC 6301 / SAUG 1402/1) (Anacystis nidulans).